The primary structure comprises 271 residues: Dermonecrotic toxin LarSicTox-alphaIB1c (271 aa).

Histidine 3 is a catalytic residue. 2 residues coordinate Mg(2+): glutamate 23 and aspartate 25. Histidine 39 functions as the Nucleophile in the catalytic mechanism. Cystine bridges form between cysteine 43/cysteine 49 and cysteine 45/cysteine 188. A Mg(2+)-binding site is contributed by aspartate 83. The N-linked (GlcNAc...) asparagine glycan is linked to asparagine 248.

This sequence belongs to the arthropod phospholipase D family. Class II subfamily. Mg(2+) serves as cofactor. In terms of tissue distribution, expressed by the venom gland.

Its subcellular location is the secreted. It catalyses the reaction an N-(acyl)-sphingosylphosphocholine = an N-(acyl)-sphingosyl-1,3-cyclic phosphate + choline. It carries out the reaction an N-(acyl)-sphingosylphosphoethanolamine = an N-(acyl)-sphingosyl-1,3-cyclic phosphate + ethanolamine. The catalysed reaction is a 1-acyl-sn-glycero-3-phosphocholine = a 1-acyl-sn-glycero-2,3-cyclic phosphate + choline. The enzyme catalyses a 1-acyl-sn-glycero-3-phosphoethanolamine = a 1-acyl-sn-glycero-2,3-cyclic phosphate + ethanolamine. Its function is as follows. Dermonecrotic toxins cleave the phosphodiester linkage between the phosphate and headgroup of certain phospholipids (sphingolipid and lysolipid substrates), forming an alcohol (often choline) and a cyclic phosphate. This toxin acts on sphingomyelin (SM). It may also act on ceramide phosphoethanolamine (CPE), lysophosphatidylcholine (LPC) and lysophosphatidylethanolamine (LPE), but not on lysophosphatidylserine (LPS), and lysophosphatidylglycerol (LPG). It acts by transphosphatidylation, releasing exclusively cyclic phosphate products as second products. Induces dermonecrosis, hemolysis, increased vascular permeability, edema, inflammatory response, and platelet aggregation. The protein is Dermonecrotic toxin LarSicTox-alphaIB1c of Loxosceles arizonica (Arizona brown spider).